The primary structure comprises 324 residues: uncharacterized protein (324 aa).

Transmembrane regions (helical) follow at residues 34 to 54 (MAVL…FYVL), 76 to 96 (VFMA…NVGL), 103 to 123 (IYQM…TTLL), 127 to 147 (IGQL…IVGY), 158 to 178 (PILG…QFTI), 198 to 218 (GTYG…FIGS), 243 to 263 (YVIS…GLAI), 275 to 295 (LDIA…MESF), and 297 to 317 (LLQF…HSII).

It localises to the membrane. This is an uncharacterized protein from Schizosaccharomyces pombe (strain 972 / ATCC 24843) (Fission yeast).